Reading from the N-terminus, the 350-residue chain is Vetispiradiene synthase 3 (350 aa).

D103, D107, D246, T250, and E254 together coordinate Mg(2+). Positions 103–107 match the DDXXD motif motif; sequence DDTFD.

This sequence belongs to the terpene synthase family. Tpsa subfamily. Mg(2+) is required as a cofactor.

The protein localises to the cytoplasm. The catalysed reaction is (2E,6E)-farnesyl diphosphate = (-)-vetispiradiene + diphosphate. The protein operates within secondary metabolite biosynthesis; terpenoid biosynthesis. In terms of biological role, sesquiterpene synthase that catalyzes the formation of vetispiradiene from trans,trans-farnesyl diphosphate. The initial internal cyclization produces the monocyclic intermediate germacrene A. The sequence is that of Vetispiradiene synthase 3 from Hyoscyamus muticus (Egyptian henbane).